Consider the following 1923-residue polypeptide: Nuclear pore complex protein GP210 (1923 aa).

A signal peptide spans 1–22; sequence MVPVSFCFFFLLLLLSAGESSS. Asparagine 73, asparagine 117, asparagine 289, asparagine 609, asparagine 863, asparagine 903, asparagine 967, asparagine 982, asparagine 1171, asparagine 1199, asparagine 1550, asparagine 1568, and asparagine 1743 each carry an N-linked (GlcNAc...) asparagine glycan. Positions 1152-1205 constitute a BIG2 domain; the sequence is IFLVPGASYVLTIEGGPTMNVSVDYTTVDNEVAKIEKSGRLYATSPGNTTIYAT. Residues 1829 to 1849 form a helical membrane-spanning segment; sequence SVLLKILWGVLVLVVSVIILM.

It belongs to the NUP210 family. In terms of assembly, part of the nuclear pore complex (NPC). The NPC has an eight-fold symmetrical structure comprising a central transport channel and two rings, the cytoplasmic and nuclear rings, to which eight filaments are attached. The cytoplasmic filaments have loose ends, while the nuclear filaments are joined in a distal ring, forming a nuclear basket. NPCs are highly dynamic in configuration and composition, and can be devided in 3 subcomplexes, the NUP62 subcomplex, the NUP107-160 subcomplex and the NUP93 subcomplex, containing approximately 30 different nucleoporin proteins.

The protein resides in the nucleus envelope. The protein localises to the nucleus membrane. It is found in the nucleus. It localises to the nuclear pore complex. The sequence is that of Nuclear pore complex protein GP210 from Arabidopsis thaliana (Mouse-ear cress).